A 286-amino-acid chain; its full sequence is Release factor glutamine methyltransferase (286 aa).

S-adenosyl-L-methionine-binding positions include 122–126 (GTGTG), Asp-145, Trp-173, and Asn-188. 188 to 191 (NPPY) is a binding site for substrate.

The protein belongs to the protein N5-glutamine methyltransferase family. PrmC subfamily.

It carries out the reaction L-glutaminyl-[peptide chain release factor] + S-adenosyl-L-methionine = N(5)-methyl-L-glutaminyl-[peptide chain release factor] + S-adenosyl-L-homocysteine + H(+). Its function is as follows. Methylates the class 1 translation termination release factors RF1/PrfA and RF2/PrfB on the glutamine residue of the universally conserved GGQ motif. This chain is Release factor glutamine methyltransferase, found in Shewanella oneidensis (strain ATCC 700550 / JCM 31522 / CIP 106686 / LMG 19005 / NCIMB 14063 / MR-1).